The chain runs to 101 residues: MSINALLYVLSLALLIWTGSVVTLLLLLFFCLFLLFFSLHFFCFTREHVHYTLPPKCHSLKFQFDSIPSSSLSLSPFPFLFFPRLRAVAFASPTLSFFFPI.

The N-terminal stretch at 1–18 (MSINALLYVLSLALLIWT) is a signal peptide. The helical transmembrane segment at 62–82 (FQFDSIPSSSLSLSPFPFLFF) threads the bilayer.

It localises to the membrane. This is an uncharacterized protein from Saccharomyces cerevisiae (strain ATCC 204508 / S288c) (Baker's yeast).